The sequence spans 404 residues: MKLPIYLDYSATTPVDPRVAQKMCECLTMEGNFGNPASRSHVFGWKAEEAVENARRQVAELVNADPREIVWTSGATESDNLAIKGVAHFYASKGKHIITSKIEHKAVLDTTRQLEREGFEVTYLEPGEDGLITPAMVAAALREDTILVSVMHVNNEIGTVNDIAAIGELTRSRGVLYHVDAAQSTGKVAIDLERMKVDLMSFSAHKTYGPKGIGALYVRRKPRVRLEAQMHGGGHERGMRSGTLATHQIVGMGEAFRIAREEMAAESRRIAGLSHRFHEQVSTLEEVYLNGSATARVPHNLNLSFNYVEGESLIMSLRDLAVSSGSACTSASLEPSYVLRALGRNDELAHSSIRFTFGRFTTEEEVDYAARKVCEAVGKLRELSPLWDMYKDGVDLSKIEWQAH.

Pyridoxal 5'-phosphate contacts are provided by residues 75–76 (AT), asparagine 155, glutamine 183, and 203–205 (SAH). The residue at position 206 (lysine 206) is an N6-(pyridoxal phosphate)lysine. A pyridoxal 5'-phosphate-binding site is contributed by threonine 243. Cysteine 328 serves as the catalytic Cysteine persulfide intermediate. Cysteine 328 contacts [2Fe-2S] cluster.

The protein belongs to the class-V pyridoxal-phosphate-dependent aminotransferase family. NifS/IscS subfamily. Homodimer. Forms a heterotetramer with IscU, interacts with other sulfur acceptors. Requires pyridoxal 5'-phosphate as cofactor.

The protein resides in the cytoplasm. It catalyses the reaction (sulfur carrier)-H + L-cysteine = (sulfur carrier)-SH + L-alanine. It participates in cofactor biosynthesis; iron-sulfur cluster biosynthesis. Master enzyme that delivers sulfur to a number of partners involved in Fe-S cluster assembly, tRNA modification or cofactor biosynthesis. Catalyzes the removal of elemental sulfur atoms from cysteine to produce alanine. Functions as a sulfur delivery protein for Fe-S cluster synthesis onto IscU, an Fe-S scaffold assembly protein, as well as other S acceptor proteins. This Azotobacter vinelandii (strain DJ / ATCC BAA-1303) protein is Cysteine desulfurase IscS.